A 408-amino-acid chain; its full sequence is uncharacterized protein (408 aa).

The tract at residues 49-77 (PRSSPEVQRKATAGENSEVGSPESSLSTS) is disordered. Residues 62-77 (GENSEVGSPESSLSTS) are compositionally biased toward polar residues. The F-box domain maps to 124–170 (SFEFMQLPDTDICQIMSFLDAQSLLNLSQTCSHLRQLCLAHEDNAGK).

This is an uncharacterized protein from Caenorhabditis elegans.